The sequence spans 679 residues: DNA ligase (679 aa).

NAD(+)-binding positions include 41–45, 90–91, and glutamate 120; these read DSVYD and SL. Lysine 122 functions as the N6-AMP-lysine intermediate in the catalytic mechanism. NAD(+) contacts are provided by arginine 143, glutamate 177, lysine 293, and lysine 317. Residues cysteine 411, cysteine 414, cysteine 429, and cysteine 434 each contribute to the Zn(2+) site. The region spanning 597-679 is the BRCT domain; the sequence is DSNSWFAGKR…SETMREDAQA (83 aa).

Belongs to the NAD-dependent DNA ligase family. LigA subfamily. It depends on Mg(2+) as a cofactor. Requires Mn(2+) as cofactor.

It carries out the reaction NAD(+) + (deoxyribonucleotide)n-3'-hydroxyl + 5'-phospho-(deoxyribonucleotide)m = (deoxyribonucleotide)n+m + AMP + beta-nicotinamide D-nucleotide.. Its function is as follows. DNA ligase that catalyzes the formation of phosphodiester linkages between 5'-phosphoryl and 3'-hydroxyl groups in double-stranded DNA using NAD as a coenzyme and as the energy source for the reaction. It is essential for DNA replication and repair of damaged DNA. The chain is DNA ligase from Lactiplantibacillus plantarum (strain ATCC BAA-793 / NCIMB 8826 / WCFS1) (Lactobacillus plantarum).